The chain runs to 103 residues: Large ribosomal subunit protein bL21 (103 aa).

This sequence belongs to the bacterial ribosomal protein bL21 family. In terms of assembly, part of the 50S ribosomal subunit. Contacts protein L20.

Its function is as follows. This protein binds to 23S rRNA in the presence of protein L20. The chain is Large ribosomal subunit protein bL21 from Borreliella afzelii (strain PKo) (Borrelia afzelii).